A 670-amino-acid polypeptide reads, in one-letter code: Solute carrier organic anion transporter family member 1A4 (670 aa).

Over 1 to 20 (MGKSEKEVATHGVRCFSKIK) the chain is Cytoplasmic. Residues 21–40 (AFLLALTCAYVSKSLSGTYM) traverse the membrane as a helical segment. Residues 41-59 (NSMLTQIERQFGIPTSVVG) are Extracellular-facing. A helical transmembrane segment spans residues 60 to 80 (LINGSFEIGNLLLIIFVSYFG). The Cytoplasmic segment spans residues 81-86 (TKLHRP). The helical transmembrane segment at 87–111 (IMIGVGCAVMGLGCFLISIPHFLMG) threads the bilayer. At 112–155 (RYEYETTILPTSNLSSNSFVCTENRTQTLKPTQDPTECVKEMKS) the chain is on the extracellular side. N-linked (GlcNAc...) asparagine glycans are attached at residues Asn-124 and Asn-135. A helical membrane pass occupies residues 156–184 (LMWIYVLVGNIIRGMGETPIMPLGISYIE). Over 185 to 203 (DFAKSENSPLYIGILETGM) the chain is Cytoplasmic. The helical transmembrane segment at 204 to 224 (TIGPLIGLLLGSSCANIYVDT) threads the bilayer. Residues 225–242 (GSVNTDDLTITPTDTRWV) lie on the Extracellular side of the membrane. A helical transmembrane segment spans residues 243-267 (GAWWIGFLVCAGVNILTSIPFFFFP). At 268 to 311 (KTLLKEGLQDNGDGTENAKEEKHREKIKEENRGITKDFFLFMKS) the chain is on the cytoplasmic side. Residues 312–333 (LSCNPIYMIFILISVIQVNAFI) traverse the membrane as a helical segment. The Extracellular portion of the chain corresponds to 334 to 353 (NSFTFMPKYLEQQYGKSTAE). A helical membrane pass occupies residues 354–377 (IVFLMGLYMLPPICLGYLIGGLIM). Residues 378 to 381 (KKFK) lie on the Cytoplasmic side of the membrane. The helical transmembrane segment at 382–405 (ITVKKAAYIGFWLSLTEYLLSFVS) threads the bilayer. Topologically, residues 406–513 (YIMTCDNFPV…PECANKLQYF (108 aa)) are extracellular. A Kazal-like domain is found at 433-488 (NNVLADCNTKCSCLTNTWDPVCGDNGLSYMSACLAGCEKSVGTGTNMVFQNCSCIQ). 3 cysteine pairs are disulfide-bonded: Cys-439–Cys-469, Cys-445–Cys-465, and Cys-454–Cys-486. Asn-483 and Asn-492 each carry an N-linked (GlcNAc...) asparagine glycan. The chain crosses the membrane as a helical span at residues 514–536 (LIISIIGCFIFSLGAIPGYMVLL). The Cytoplasmic portion of the chain corresponds to 537-545 (RCMKSEEKS). Residues 546 to 571 (LGVGLHTFCMRILGGIPAPIYFGALI) form a helical membrane-spanning segment. Residues 572–605 (DRTCLHWGTLKCGEPGACRMYDINSFRRIYLGLP) lie on the Extracellular side of the membrane. A helical membrane pass occupies residues 606-623 (AALRGASFLPALFILILM). The Cytoplasmic portion of the chain corresponds to 624 to 670 (RKFQFPGDIDSSDTDPAEMKLTAKESKCTNVHRSPTMQNDGERKTKL). Phosphoserine is present on residues Ser-634 and Ser-635. Positions 649–670 (SKCTNVHRSPTMQNDGERKTKL) are disordered. Over residues 651-662 (CTNVHRSPTMQN) the composition is skewed to polar residues.

Belongs to the organo anion transporter (TC 2.A.60) family. As to expression, highly expressed in brain and liver. Detected at very low levels in heart and lung.

The protein resides in the cell membrane. The catalysed reaction is estrone 3-sulfate(out) = estrone 3-sulfate(in). It catalyses the reaction taurocholate(out) = taurocholate(in). It carries out the reaction prostaglandin E2(out) = prostaglandin E2(in). The enzyme catalyses L-thyroxine(out) = L-thyroxine(in). Mediates the Na(+)-independent transport of organic anions such as taurocholate, cholate, 17-beta-glucuronosyl estradiol, prostaglandin E2, estrone 3-sulfate, L-thyroxine (T4), the cardiac glycosides ouabain and digoxin and thyroid hormones. Shows a pH-sensitive substrate specificity which may be ascribed to the protonation state of the binding site and leads to a stimulation of substrate transport in an acidic microenvironment. Hydrogencarbonate/HCO3(-) acts as the probable counteranion that exchanges for organic anions. This Mus musculus (Mouse) protein is Solute carrier organic anion transporter family member 1A4 (Slco1a4).